The following is a 294-amino-acid chain: Deubiquitinase OTUD6B (294 aa).

Disordered stretches follow at residues 1–46 (MDEA…RKQL) and 67–120 (AFAQ…ERDE). Polar residues-rich tracts occupy residues 27–36 (KIQSMKNSVP) and 73–86 (PEPT…NGVT). Basic and acidic residues predominate over residues 111 to 120 (KAAQEKERDE). The region spanning 150 to 287 (LQIRQIPSDG…GEHYNSVELL (138 aa)) is the OTU domain. The segment at 155-161 (IPSDGHC) is cys-loop. Aspartate 158 is an active-site residue. Cysteine 161 functions as the Nucleophile in the catalytic mechanism. Residues 222 to 232 (IVNTPAWGGQL) form a variable-loop region. The his-loop stretch occupies residues 270–280 (YMRHAYGLGEH). Histidine 280 is an active-site residue.

It carries out the reaction Thiol-dependent hydrolysis of ester, thioester, amide, peptide and isopeptide bonds formed by the C-terminal Gly of ubiquitin (a 76-residue protein attached to proteins as an intracellular targeting signal).. Functionally, deubiquitinating enzyme that may play a role in the ubiquitin-dependent regulation of different cellular processes. In Xenopus tropicalis (Western clawed frog), this protein is Deubiquitinase OTUD6B (otud6b).